The chain runs to 1022 residues: Protein trachealess (1022 aa).

Positions 86–139 (LRKEKSRDAARSRRGKENYEFYELAKMLPLPAAITSQLDKASIIRLTISYLKLR) constitute a bHLH domain. Residues 174–244 (EQHQGTHILQ…DQLGLSLTSG (71 aa)) form the PAS 1 domain. A disordered region spans residues 239 to 289 (LSLTSGGGGGGGSSSSGGGGGGAGGGMASPTSGASDDGSGTHGTNNPDVAA). The span at 243-265 (SGGGGGGGSSSSGGGGGGAGGGM) shows a compositional bias: gly residues. Over residues 280–289 (HGTNNPDVAA) the composition is skewed to polar residues. Residues 391-461 (PPPSVHEIRL…KSHSDLIEKG (71 aa)) form the PAS 2 domain. In terms of domain architecture, PAC spans 465 to 508 (TGYYRLMNKSGGYTWLQTCATVVCSTKNADEQNIICVNYVISNR). Disordered stretches follow at residues 525–686 (DSIK…ADSA), 849–896 (AMTP…GDVV), and 962–996 (DDQG…ASQA). 2 stretches are compositionally biased toward low complexity: residues 578-587 (RSAAASHGSS) and 611-625 (PTTV…TPPV). Residues 629 to 636 (KRKRKTKA) carry the Nuclear localization signal motif. The residue at position 673 (Ser-673) is a Phosphoserine; by PKB/Akt1. Polar residues predominate over residues 851–864 (TPPSSVSPRDSNQP). Over residues 987-996 (GSAGSSASQA) the composition is skewed to low complexity.

Efficient DNA binding requires dimerization with another bHLH protein. Heterodimer with tgo. Post-translationally, ser-673 phosphorylation by PKB/Akt1 is required for nuclear targeting and transcriptional activity. In terms of tissue distribution, trachea, salivary gland ducts, posterior spiracles (Filzkoeper primordia) and a subset of cells in the CNS.

It localises to the nucleus. In terms of biological role, transcription factor, master regulator of tracheal cell fates in the embryo, necessary for the development of the salivary gland duct, Malpighian tubules and the posterior spiracles. It may induce a general fate of branched tubular structures of epithelial origin. Functions with tgo to regulate expression of btl. In Drosophila melanogaster (Fruit fly), this protein is Protein trachealess (trh).